Consider the following 511-residue polypeptide: Pancreatic alpha-amylase (511 aa).

Residues 1–15 (MKFFLLLFTIGFCWA) form the signal peptide. Glutamine 16 bears the Pyrrolidone carboxylic acid mark. Intrachain disulfides connect cysteine 43/cysteine 101, cysteine 85/cysteine 130, and cysteine 156/cysteine 175. 3 residues coordinate Ca(2+): asparagine 115, arginine 173, and aspartate 182. Arginine 210 serves as a coordination point for chloride. The active-site Nucleophile is the aspartate 212. Histidine 216 lines the Ca(2+) pocket. Residue glutamate 248 is the Proton donor of the active site. The chloride site is built by asparagine 313 and arginine 352. 2 disulfides stabilise this stretch: cysteine 393-cysteine 399 and cysteine 465-cysteine 477. Asparagine 476 is a glycosylation site (N-linked (GlcNAc...) asparagine).

It belongs to the glycosyl hydrolase 13 family. Monomer. Binds to the sea anemone inhibitor helianthamide. Requires Ca(2+) as cofactor. It depends on chloride as a cofactor. As to expression, detected in pancreas (at protein level).

The protein localises to the secreted. It localises to the extracellular space. It catalyses the reaction Endohydrolysis of (1-&gt;4)-alpha-D-glucosidic linkages in polysaccharides containing three or more (1-&gt;4)-alpha-linked D-glucose units.. This Homo sapiens (Human) protein is Pancreatic alpha-amylase (AMY2A).